A 481-amino-acid polypeptide reads, in one-letter code: Ribosomal protein uS12 methylthiotransferase RimO (481 aa).

The region spanning Met-8–Asp-124 is the MTTase N-terminal domain. [4Fe-4S] cluster contacts are provided by Cys-17, Cys-53, and Cys-87. The disordered stretch occupies residues Pro-148–Ala-188. The 232-residue stretch at Leu-182–Arg-413 folds into the Radical SAM core domain. Residues Cys-196, Cys-200, and Cys-203 each coordinate [4Fe-4S] cluster. In terms of domain architecture, TRAM spans Glu-415–Asn-480.

This sequence belongs to the methylthiotransferase family. RimO subfamily. [4Fe-4S] cluster is required as a cofactor.

It is found in the cytoplasm. It carries out the reaction L-aspartate(89)-[ribosomal protein uS12]-hydrogen + (sulfur carrier)-SH + AH2 + 2 S-adenosyl-L-methionine = 3-methylsulfanyl-L-aspartate(89)-[ribosomal protein uS12]-hydrogen + (sulfur carrier)-H + 5'-deoxyadenosine + L-methionine + A + S-adenosyl-L-homocysteine + 2 H(+). In terms of biological role, catalyzes the methylthiolation of an aspartic acid residue of ribosomal protein uS12. This is Ribosomal protein uS12 methylthiotransferase RimO from Cutibacterium acnes (strain DSM 16379 / KPA171202) (Propionibacterium acnes).